Consider the following 237-residue polypeptide: tRNA1(Val) (adenine(37)-N6)-methyltransferase (237 aa).

Belongs to the methyltransferase superfamily. tRNA (adenine-N(6)-)-methyltransferase family.

The protein localises to the cytoplasm. The enzyme catalyses adenosine(37) in tRNA1(Val) + S-adenosyl-L-methionine = N(6)-methyladenosine(37) in tRNA1(Val) + S-adenosyl-L-homocysteine + H(+). Its function is as follows. Specifically methylates the adenine in position 37 of tRNA(1)(Val) (anticodon cmo5UAC). This is tRNA1(Val) (adenine(37)-N6)-methyltransferase from Bacteroides fragilis (strain YCH46).